The following is a 277-amino-acid chain: Shikimate dehydrogenase (NADP(+)) (277 aa).

Shikimate-binding positions include 15–17 (SLS) and Thr62. Lys66 serves as the catalytic Proton acceptor. Residues Asn87 and Asp102 each contribute to the shikimate site. NADP(+)-binding positions include 127 to 131 (GAGGA), 151 to 156 (NRTVDK), and Ile219. A shikimate-binding site is contributed by Tyr221. Gly242 lines the NADP(+) pocket.

This sequence belongs to the shikimate dehydrogenase family. As to quaternary structure, homodimer.

It carries out the reaction shikimate + NADP(+) = 3-dehydroshikimate + NADPH + H(+). It participates in metabolic intermediate biosynthesis; chorismate biosynthesis; chorismate from D-erythrose 4-phosphate and phosphoenolpyruvate: step 4/7. Involved in the biosynthesis of the chorismate, which leads to the biosynthesis of aromatic amino acids. Catalyzes the reversible NADPH linked reduction of 3-dehydroshikimate (DHSA) to yield shikimate (SA). This is Shikimate dehydrogenase (NADP(+)) from Bacillus cereus (strain 03BB102).